Consider the following 158-residue polypeptide: NADH-quinone oxidoreductase subunit B (158 aa).

Cys37, Cys38, Cys102, and Cys132 together coordinate [4Fe-4S] cluster.

It belongs to the complex I 20 kDa subunit family. NDH-1 is composed of 14 different subunits. Subunits NuoB, C, D, E, F, and G constitute the peripheral sector of the complex. It depends on [4Fe-4S] cluster as a cofactor.

Its subcellular location is the cell inner membrane. It carries out the reaction a quinone + NADH + 5 H(+)(in) = a quinol + NAD(+) + 4 H(+)(out). In terms of biological role, NDH-1 shuttles electrons from NADH, via FMN and iron-sulfur (Fe-S) centers, to quinones in the respiratory chain. The immediate electron acceptor for the enzyme in this species is believed to be ubiquinone. Couples the redox reaction to proton translocation (for every two electrons transferred, four hydrogen ions are translocated across the cytoplasmic membrane), and thus conserves the redox energy in a proton gradient. In Thioalkalivibrio sulfidiphilus (strain HL-EbGR7), this protein is NADH-quinone oxidoreductase subunit B.